The sequence spans 640 residues: DNA mismatch repair protein MutL (640 aa).

Disordered stretches follow at residues 332–353 (PNVQ…FNFP) and 408–431 (PAHT…TFHD).

It belongs to the DNA mismatch repair MutL/HexB family.

This protein is involved in the repair of mismatches in DNA. It is required for dam-dependent methyl-directed DNA mismatch repair. May act as a 'molecular matchmaker', a protein that promotes the formation of a stable complex between two or more DNA-binding proteins in an ATP-dependent manner without itself being part of a final effector complex. The protein is DNA mismatch repair protein MutL of Chloroherpeton thalassium (strain ATCC 35110 / GB-78).